The sequence spans 492 residues: Putative transporter SVOPL (492 aa).

10 consecutive transmembrane segments (helical) span residues 48 to 68, 86 to 106, 121 to 141, 179 to 199, 203 to 223, 281 to 301, 348 to 368, 383 to 403, 429 to 449, and 458 to 478; these read IALFLIMGSTGVVEAMEIMLI, VALVTTMVFFGYMVFSILFGL, FLWGAYFSLLTSFAPSYIWFV, VFWLAGSLLIIGLASVIIPTI, WLIRVASIPGIILIVAFKFIP, TLQIWVIWLGISFAYYGVILA, IISTIGEIALNPLNILGINFL, LFFLLLNICTSSAGLIGFLFM, ALGMGTSGSLCRIGAMVAPFI, and ILGALCLFSSVCVVCAISAFT.

The protein belongs to the major facilitator superfamily.

It localises to the membrane. This chain is Putative transporter SVOPL (SVOPL), found in Homo sapiens (Human).